Reading from the N-terminus, the 507-residue chain is ATP synthase subunit alpha, plastid (507 aa).

170–177 (GDRQTGKT) contacts ATP.

Belongs to the ATPase alpha/beta chains family. As to quaternary structure, F-type ATPases have 2 components, CF(1) - the catalytic core - and CF(0) - the membrane proton channel. CF(1) has five subunits: alpha(3), beta(3), gamma(1), delta(1), epsilon(1). CF(0) has four main subunits: a, b, b' and c.

Its subcellular location is the plastid membrane. It carries out the reaction ATP + H2O + 4 H(+)(in) = ADP + phosphate + 5 H(+)(out). Functionally, produces ATP from ADP in the presence of a proton gradient across the membrane. The alpha chain is a regulatory subunit. This chain is ATP synthase subunit alpha, plastid, found in Aneura mirabilis (Parasitic liverwort).